Reading from the N-terminus, the 103-residue chain is Phosphoribosyl-ATP pyrophosphatase (103 aa).

It belongs to the PRA-PH family.

Its subcellular location is the cytoplasm. The enzyme catalyses 1-(5-phospho-beta-D-ribosyl)-ATP + H2O = 1-(5-phospho-beta-D-ribosyl)-5'-AMP + diphosphate + H(+). The protein operates within amino-acid biosynthesis; L-histidine biosynthesis; L-histidine from 5-phospho-alpha-D-ribose 1-diphosphate: step 2/9. This chain is Phosphoribosyl-ATP pyrophosphatase, found in Listeria monocytogenes serotype 4b (strain CLIP80459).